The chain runs to 714 residues: NCK-interacting protein with SH3 domain (714 aa).

Residues 1–58 enclose the SH3 domain; that stretch reads MYRALYAFRSAEPNAMAFAAGETFLVLERSSTHWWLAARARSGETGYVPPAYLHRLQG. 2 disordered regions span residues 103 to 126 and 139 to 298; these read TLSR…DHHL and RTGF…AAET. Positions 106–121 are enriched in polar residues; that stretch reads RRGTSASSATVMTPST. At S120 the chain carries Phosphoserine. The short motif at 168–185 is the Nuclear localization signal element; sequence RRAAPTTPPPPVKRRDRE. At T174 the chain carries Phosphothreonine. Residues 200 to 215 show a composition bias toward low complexity; the sequence is SGGSSVSSGSSASSTS. Residues 216–226 show a composition bias toward polar residues; it reads MDTLYTGSSPS. Positions 252-263 are enriched in pro residues; it reads QPSPSKAPSPEP. S260, S286, and S673 each carry phosphoserine.

Associates with the intermediate filaments, vimentin and desmin. Binds the first and third SH3 domains of NCK. Binds the proline-rich domains of N-WASP through its SH3 domain. Similarly, binds diaphanous protein homolog 1 (DRF1). Binds the SH3 domains of GRB2 through its proline-rich domains. Interacts with FASLG.

Its subcellular location is the nucleus. Has an important role in stress fiber formation induced by active diaphanous protein homolog 1 (DRF1). Induces microspike formation, in vivo. In vitro, stimulates N-WASP-induced ARP2/3 complex activation in the absence of CDC42. May play an important role in the maintenance of sarcomere and/or in the assembly of myofibrils into sarcomeres. Implicated in regulation of actin polymerization and cell adhesion. The sequence is that of NCK-interacting protein with SH3 domain (Nckipsd) from Mus musculus (Mouse).